Here is a 310-residue protein sequence, read N- to C-terminus: S-adenosylmethionine-dependent nucleotide dehydratase (310 aa).

A Radical SAM core domain is found at 3 to 221 (PAIPPTINLH…VERHRKVESS (219 aa)). 3 residues coordinate [4Fe-4S] cluster: cysteine 17, cysteine 21, and cysteine 24.

The protein belongs to the radical SAM superfamily. Viperin family. [4Fe-4S] cluster is required as a cofactor.

The enzyme catalyses GTP + AH2 + S-adenosyl-L-methionine = 3'-deoxy-3',4'-didehydro-GTP + 5'-deoxyadenosine + L-methionine + A + H2O + H(+). Its function is as follows. Expression of pVip15 in E.coli (strain MG1655) confers resistance to phage T7; prevents culture collapse upon infection. Catalyzes the conversion of guanosine triphosphate (GTP) to 3'-deoxy-3',4'-didehydro-GTP (ddhGTP), probably via a SAM-dependent radical mechanism. The modified nucleotide represses transcription from T7 RNA polymerase-directed genes (possibly by acting as chain terminators), strongly suggesting these nucleotides block viral polymerase transcription. This is S-adenosylmethionine-dependent nucleotide dehydratase from Coraliomargarita akajimensis (strain DSM 45221 / IAM 15411 / JCM 23193 / KCTC 12865 / 04OKA010-24).